The primary structure comprises 467 residues: Mothers against decapentaplegic homolog 2 (467 aa).

N-acetylserine is present on Ser2. Position 8 is a phosphothreonine (Thr8). In terms of domain architecture, MH1 spans 10 to 176 (PVVKRLLGWK…YQRVETPVLP (167 aa)). Lys19 is subject to N6-acetyllysine. Cys74, Cys149, Cys161, and His166 together coordinate Zn(2+). A compositionally biased stretch (polar residues) spans 207–217 (PAGIEPQSNYI). The segment at 207 to 251 (PAGIEPQSNYIPETPPPGYISEDGETSDQQLNQSMDTGSPAELSP) is disordered. The residue at position 220 (Thr220) is a Phosphothreonine. Residues 221–225 (PPPGY) carry the PY-motif motif. Residues 233-243 (SDQQLNQSMDT) are compositionally biased toward polar residues. The residue at position 240 (Ser240) is a Phosphoserine; by CAMK2. A phosphoserine mark is found at Ser245, Ser250, Ser255, Ser458, Ser460, and Ser464. Residues 274 to 467 (WCSIAYYELN…SPSVRCSSMS (194 aa)) enclose the MH2 domain. Phosphoserine; by TGFBR1 is present on residues Ser465 and Ser467.

Belongs to the dwarfin/SMAD family. Monomer; in the absence of TGF-beta. Heterodimer; in the presence of TGF-beta. Forms a heterodimer with co-SMAD, SMAD4, in the nucleus to form the transactivation complex SMAD2/SMAD4. Found in a complex with SMAD3 and TRIM33 upon addition of TGF-beta. Identified in a complex that contains at least ZNF451, SMAD2, SMAD3 and SMAD4. Interacts (via the MH2 domain) with ZFYVE9; may form trimers with the SMAD4 co-SMAD. Interacts with TAZ/WWRT1. Interacts with FOXH1. Interacts with SNW1. Interacts with CREB-binding protein (CBP) and EP300. Interacts with SNON. Interacts with ALK4/ACVR1B. Interacts with SKOR1. Interacts with SKOR2. Interacts with PRDM16. Interacts (via MH2 domain) with LEMD3. Interacts with RBPMS. Interacts with WWP1. Interacts (dephosphorylated form, via the MH1 and MH2 domains) with RANBP3 (via its C-terminal R domain); the interaction results in the export of dephosphorylated SMAD3 out of the nucleus and termination of the TGF-beta signaling. Interacts with PDPK1 (via PH domain). Interacts with DAB2; the interactions are enhanced upon TGF-beta stimulation. Interacts with USP15. Interacts with PPP5C. Interacts with LDLRAD4 (via the SMAD interaction motif). Interacts (via MH2 domain) with PMEPA1 (via the SMAD interaction motif). Interacts with ZFHX3. Interacts with ZNF451. Interacts with SMURF2 when phosphorylated on Ser-465/467. Interacts with PPM1A. Interacts with TGF-beta. Interacts with TGFBR1. Interacts with TGIF. Interacts with SMAD3 and TRIM33. Interacts with ZNF580. Interacts with NEDD4L in response to TGF-beta. Interacts with HGS. Interacts with AIP1. Interacts with WWP1. Interacts with PML. Interacts weakly with ZNF8. Interacts (when phosphorylated) with RNF111; RNF111 acts as an enhancer of the transcriptional responses by mediating ubiquitination and degradation of SMAD2 inhibitors. Interacts with YAP1 (when phosphorylated at 'Ser-112'). Interacts when phosphorylated with IPO7; the interaction facilitates translocation of SMAD2 to the nucleus. Interacts with MTMR4; negatively regulates TGF-beta signaling through SMAD2 dephosphorylation and retention in endosomes. In response to TGF-beta, phosphorylated on the C-terminal SXS motif by TGF-beta and activin type 1 receptor kinases, phosphorylation declines progressively in a KMT5A-dependent manner. Phosphorylation in this motif is required for interaction with a number of proteins including SMURF2, SNON and SMAD4 in response to TGF-beta. Dephosphorylated in this motif by PPM1A leading to disruption of the SMAD2/3-SMAD4 complex, nuclear export and termination of the TGF-beta signaling. In response to decorin, the naturally occurring inhibitor of TGF-beta signaling, phosphorylated on Ser-240 by CaMK2. Phosphorylated by MAPK3 upon EGF stimulation; which increases transcriptional activity and stability, and is blocked by calmodulin. Phosphorylated by PDPK1. Post-translationally, acetylated on Lys-19 by coactivators in response to TGF-beta signaling, which increases transcriptional activity. In terms of processing, in response to TGF-beta, ubiquitinated by NEDD4L; which promotes its degradation. Monoubiquitinated, leading to prevent DNA-binding. Deubiquitination by USP15 alleviates inhibition and promotes activation of TGF-beta target genes. Ubiquitinated by RNF111, leading to its degradation: only SMAD2 proteins that are 'in use' are targeted by RNF111, RNF111 playing a key role in activating SMAD2 and regulating its turnover. Expressed in cardiomyocytes.

It localises to the cytoplasm. The protein localises to the nucleus. Functionally, receptor-regulated SMAD (R-SMAD) that is an intracellular signal transducer and transcriptional modulator activated by TGF-beta (transforming growth factor) and activin type 1 receptor kinases. Binds the TRE element in the promoter region of many genes that are regulated by TGF-beta and, on formation of the SMAD2/SMAD4 complex, activates transcription. Promotes TGFB1-mediated transcription of odontoblastic differentiation genes in dental papilla cells. Positively regulates PDPK1 kinase activity by stimulating its dissociation from the 14-3-3 protein YWHAQ which acts as a negative regulator. This chain is Mothers against decapentaplegic homolog 2 (Smad2), found in Rattus norvegicus (Rat).